We begin with the raw amino-acid sequence, 32 residues long: Cytochrome b6-f complex subunit 6 (32 aa).

A helical membrane pass occupies residues 6-26 (VFYIVFIALFFGIAVGIIFAI).

The protein belongs to the PetL family. As to quaternary structure, the 4 large subunits of the cytochrome b6-f complex are cytochrome b6, subunit IV (17 kDa polypeptide, PetD), cytochrome f and the Rieske protein, while the 4 small subunits are PetG, PetL, PetM and PetN. The complex functions as a dimer.

Its subcellular location is the cellular thylakoid membrane. Its function is as follows. Component of the cytochrome b6-f complex, which mediates electron transfer between photosystem II (PSII) and photosystem I (PSI), cyclic electron flow around PSI, and state transitions. PetL is important for photoautotrophic growth as well as for electron transfer efficiency and stability of the cytochrome b6-f complex. The chain is Cytochrome b6-f complex subunit 6 from Mastigocladus laminosus (Fischerella sp.).